The chain runs to 54 residues: Califin-B (54 aa).

Cysteines 25 and 53 form a disulfide. L36 carries the post-translational modification Leucine amide.

The protein belongs to the molluscan ELH family. As to quaternary structure, this protein consists of a large 36-residue subunit, bound by a single disulfide-bond to a small 18-residue subunit.

Its subcellular location is the secreted. In terms of biological role, injected in sexually mature animals califin B excites LB and LC cells of the abdominal ganglion and cause egg-laying. This chain is Califin-B, found in Aplysia californica (California sea hare).